The primary structure comprises 1161 residues: DNA-directed RNA polymerase subunit beta (1161 aa).

Belongs to the RNA polymerase beta chain family. As to quaternary structure, the RNAP catalytic core consists of 2 alpha, 1 beta, 1 beta' and 1 omega subunit. When a sigma factor is associated with the core the holoenzyme is formed, which can initiate transcription. The RNAP complex including the principal sigma factor HrdB also interacts with RNA-binding protein RbpA.

The enzyme catalyses RNA(n) + a ribonucleoside 5'-triphosphate = RNA(n+1) + diphosphate. In terms of biological role, DNA-dependent RNA polymerase catalyzes the transcription of DNA into RNA using the four ribonucleoside triphosphates as substrates. The sequence is that of DNA-directed RNA polymerase subunit beta from Streptomyces coelicolor (strain ATCC BAA-471 / A3(2) / M145).